Consider the following 322-residue polypeptide: Endochitinase CH25 (322 aa).

The signal sequence occupies residues 1-20 (MKSCLLLFLIFSFLLSFSLA). The region spanning 21–62 (EQCGRQAGGALCPNGLCCSEFGWCGDTEAYCKQPGCQSQCGG) is the Chitin-binding type-1 domain. Disulfide bonds link C23-C38, C32-C44, C37-C51, C56-C60, C92-C154, C166-C174, and C273-C305. E136 functions as the Proton donor in the catalytic mechanism.

It belongs to the glycosyl hydrolase 19 family. Chitinase class I subfamily. In terms of tissue distribution, high expression in roots, moderate in floral tissues and low in stems and leaves.

The enzyme catalyses Random endo-hydrolysis of N-acetyl-beta-D-glucosaminide (1-&gt;4)-beta-linkages in chitin and chitodextrins.. The polypeptide is Endochitinase CH25 (Brassica napus (Rape)).